We begin with the raw amino-acid sequence, 589 residues long: MSETKPAANDLSNVPSASDSDKDNSLDKVHSLEKTGVHEDINKLPSSDLEQLEDDGREPTLEEMKKLRHISEKIPLSCWLVAIVELAERFSYYGLSTPFQNYMQNSPEDKPKGVLHLKNSGATALSYFWQFWCYVTPIFGAWIADTYTGKYNAICIFCGIYLVGILILFITSIPSVASYNTSLGGFIVAIIIIGLGTGGVKSNVSPLIADQIPKTKPVIKVLKSGERVIQDPNITIQNVFMFFYLMINIGSLSVIATTSLEHHVDFWAGYLLPLCFFCIAPLVLLLGRPYYVKVPVGEQVIARSFRCTYLAVKNKFNFDAARPSLHPEAGYPWSEKFVEEVRRSVYACKVFVFYPIYWLVYGQMINNFVSQAGQMELHGLPNDILQAINAITIIIFIPICERFVYPFIRRFTPFRAITKIFWGFMFASSAMVYAGVLQHFIYQQGPCYEFPKECAEEFRQVPNRIHIAIQTPAYFLIGMSEILASITGLEYAYTKAPVSMKSFIMSLFLVTNAFGSAIGIALSPTSKNPKLVWTYTGLAVSCFIAGCLFYIIFHHYNDKEDELNQLDYMEEDEVRLQPITSITESLAAR.

A disordered region spans residues 1-56; that stretch reads MSETKPAANDLSNVPSASDSDKDNSLDKVHSLEKTGVHEDINKLPSSDLEQLEDDG. Residues 19–42 are compositionally biased toward basic and acidic residues; sequence DSDKDNSLDKVHSLEKTGVHEDIN. A run of 4 helical transmembrane segments spans residues 74-95, 124-144, 153-173, and 180-200; these read IPLS…YYGL, ALSY…AWIA, AICI…ITSI, and NTSL…TGGV. N-linked (GlcNAc...) asparagine glycosylation is present at asparagine 233. 8 consecutive transmembrane segments (helical) span residues 236–256, 266–286, 345–365, 388–408, 420–440, 467–487, 502–522, and 533–553; these read IQNV…SVIA, FWAG…VLLL, VYAC…GQMI, INAI…YPFI, IFWG…LQHF, IAIQ…ASIT, SFIM…GIAL, and WTYT…YIIF.

It belongs to the major facilitator superfamily. Proton-dependent oligopeptide transporter (POT/PTR) (TC 2.A.17) family.

The protein resides in the cell membrane. It carries out the reaction a dipeptide(out) + H(+)(out) = a dipeptide(in) + H(+)(in). The catalysed reaction is an L-amino acid tripeptide(out) + H(+)(out) = an L-amino acid tripeptide(in) + H(+)(in). In terms of biological role, peptide transporter that exploits the inwardly directed proton motive force to facilitate the cellular uptake of di/tripeptides. The polypeptide is Peptide transporter PTR_A (Candidozyma auris (Yeast)).